Consider the following 130-residue polypeptide: MYRAVTRHIEVTVEPNFLPEKSSVADGRWFWSYTVVITNSGAETVQLRSRHWVITDGAGRQQEVRGEGVVGEQPVLAPGERFEYTSGVPLSTASGFMSGSYQMESASGEQFDIVVPAFSLDSPDGKRVLN.

The region spanning 3–127 is the ApaG domain; that stretch reads RAVTRHIEVT…FSLDSPDGKR (125 aa).

In Bradyrhizobium sp. (strain ORS 278), this protein is Protein ApaG.